The primary structure comprises 155 residues: Prespore-specific protein E (155 aa).

The N-terminal stretch at 1–20 (MRFISIFLIIVALCVSSSWA) is a signal peptide. Asn-22, Asn-82, Asn-85, and Asn-102 each carry an N-linked (GlcNAc...) asparagine glycan. Residue Ser-105 is glycosylated (O-linked (GlcNAc) serine). Residue Asn-133 is the site of GPI-like-anchor amidated asparagine attachment. A propeptide spans 134–155 (SADKVAVGIAIIFGALISLLAL) (removed in mature form).

The GPI-like-anchor contains a phosphoceramide group, rather than a phosphatidyl group.

The protein resides in the cell membrane. This is Prespore-specific protein E (pspE) from Dictyostelium discoideum (Social amoeba).